The sequence spans 146 residues: Transcriptional regulator MraZ (146 aa).

SpoVT-AbrB domains are found at residues 5 to 47 (EYYH…TITD) and 76 to 119 (SVQV…AKER).

The protein belongs to the MraZ family. Forms oligomers.

The protein localises to the cytoplasm. Its subcellular location is the nucleoid. This is Transcriptional regulator MraZ from Dictyoglomus turgidum (strain DSM 6724 / Z-1310).